Here is a 309-residue protein sequence, read N- to C-terminus: tRNA dimethylallyltransferase 1 (309 aa).

Residue 14 to 21 participates in ATP binding; it reads GPTASGKS. 16-21 is a binding site for substrate; sequence TASGKS. The segment at 39 to 42 is interaction with substrate tRNA; sequence DSMQ.

It belongs to the IPP transferase family. As to quaternary structure, monomer. Requires Mg(2+) as cofactor.

The catalysed reaction is adenosine(37) in tRNA + dimethylallyl diphosphate = N(6)-dimethylallyladenosine(37) in tRNA + diphosphate. Catalyzes the transfer of a dimethylallyl group onto the adenine at position 37 in tRNAs that read codons beginning with uridine, leading to the formation of N6-(dimethylallyl)adenosine (i(6)A). This is tRNA dimethylallyltransferase 1 from Pelobacter propionicus (strain DSM 2379 / NBRC 103807 / OttBd1).